The primary structure comprises 316 residues: MKVLWVALVITLLAGCQAEVEPEPEPEVQLGREWPRWQGSQPWEQALGRFWDYLRWVQTLSDQVQEELLSTQVIQELTVLMDETMKEVKAYREELEGQLGPIAQETQARVSKELQAAQARLASDMEDVRSRVAQYRSEVQAMMGQTTDELRGRLASHLRKLRKRLLRDAEDLQKRLAVYRAGALEGSERSVSAIRERLGPLVEQGRVRAATVGTLASQTLRERAEAWHQKLRGRMEEMGTQARDHLEEMREQLEEVRAKVEEQGSQMRLQAEAFQARLKSWFEPLVEDMQRQWAGLVEKVQLAMATSPTSAPIENS.

Positions 1-18 (MKVLWVALVITLLAGCQA) are cleaved as a signal peptide. A run of 8 repeats spans residues 79–100 (VLMD…GQLG), 101–122 (PIAQ…ARLA), 123–144 (SDME…AMMG), 145–166 (QTTD…KRLL), 167–188 (RDAE…EGSE), 189–210 (RSVS…VRAA), 211–232 (TVGT…QKLR), and 233–254 (GRME…EQLE). Positions 79–254 (VLMDETMKEV…HLEEMREQLE (176 aa)) are 8 X 22 AA approximate tandem repeats. The residue at position 142 (methionine 142) is a Methionine sulfoxide. The segment at 157-167 (HLRKLRKRLLR) is LDL and other lipoprotein receptors binding. A heparin-binding site is contributed by 161 to 164 (LRKR). Positions 209 to 289 (AATVGTLASQ…SWFEPLVEDM (81 aa)) are lipid-binding and lipoprotein association. A heparin-binding site is contributed by 228-235 (HQKLRGRM). The segment at 265–316 (SQMRLQAEAFQARLKSWFEPLVEDMQRQWAGLVEKVQLAMATSPTSAPIENS) is homooligomerization. The segment at 277–289 (RLKSWFEPLVEDM) is specificity for association with VLDL.

It belongs to the apolipoprotein A1/A4/E family. Homotetramer. May interact with ABCA1; functionally associated with ABCA1 in the biogenesis of HDLs. May interact with APP/A4 amyloid-beta peptide; the interaction is extremely stable in vitro but its physiological significance is unclear. May interact with MAPT. May interact with MAP2. In the cerebrospinal fluid, interacts with secreted SORL1. Interacts with PMEL; this allows the loading of PMEL luminal fragment on ILVs to induce fibril nucleation. Post-translationally, APOE exists as multiple glycosylated and sialylated glycoforms within cells and in plasma. The extent of glycosylation and sialylation are tissue and context specific. In terms of processing, glycated in plasma VLDL. Phosphorylated by FAM20C in the extracellular medium.

It localises to the secreted. It is found in the extracellular space. The protein resides in the extracellular matrix. Its subcellular location is the extracellular vesicle. The protein localises to the endosome. It localises to the multivesicular body. APOE is an apolipoprotein, a protein associating with lipid particles, that mainly functions in lipoprotein-mediated lipid transport between organs via the plasma and interstitial fluids. APOE is a core component of plasma lipoproteins and is involved in their production, conversion and clearance. Apolipoproteins are amphipathic molecules that interact both with lipids of the lipoprotein particle core and the aqueous environment of the plasma. As such, APOE associates with chylomicrons, chylomicron remnants, very low density lipoproteins (VLDL) and intermediate density lipoproteins (IDL) but shows a preferential binding to high-density lipoproteins (HDL). It also binds a wide range of cellular receptors including the LDL receptor/LDLR and the very low-density lipoprotein receptor/VLDLR that mediate the cellular uptake of the APOE-containing lipoprotein particles. Finally, APOE also has a heparin-binding activity and binds heparan-sulfate proteoglycans on the surface of cells, a property that supports the capture and the receptor-mediated uptake of APOE-containing lipoproteins by cells. In Orcinus orca (Killer whale), this protein is Apolipoprotein E (APOE).